Consider the following 270-residue polypeptide: DNA repair protein RecO (270 aa).

Residues 202 to 221 are disordered; sequence PELPPSTIDADTDNPSQPPS.

Belongs to the RecO family.

Functionally, involved in DNA repair and RecF pathway recombination. This Rhodopirellula baltica (strain DSM 10527 / NCIMB 13988 / SH1) protein is DNA repair protein RecO.